The following is a 308-amino-acid chain: Ribonuclease HIII (308 aa).

An RNase H type-2 domain is found at 92–308 (DNHIGSDEAG…ANTQKAQKLL (217 aa)). A divalent metal cation-binding residues include Asp-98, Glu-99, and Asp-204.

Belongs to the RNase HII family. RnhC subfamily. Mn(2+) serves as cofactor. Mg(2+) is required as a cofactor.

It is found in the cytoplasm. The enzyme catalyses Endonucleolytic cleavage to 5'-phosphomonoester.. Its function is as follows. Endonuclease that specifically degrades the RNA of RNA-DNA hybrids. This Oceanobacillus iheyensis (strain DSM 14371 / CIP 107618 / JCM 11309 / KCTC 3954 / HTE831) protein is Ribonuclease HIII.